The chain runs to 156 residues: Large ribosomal subunit protein eL24 (156 aa).

Residues leucine 87 to arginine 156 are disordered. The segment covering leucine 89 to lysine 129 has biased composition (basic and acidic residues). Positions serine 130 to alanine 147 are enriched in low complexity.

Belongs to the eukaryotic ribosomal protein eL24 family.

In Debaryomyces hansenii (strain ATCC 36239 / CBS 767 / BCRC 21394 / JCM 1990 / NBRC 0083 / IGC 2968) (Yeast), this protein is Large ribosomal subunit protein eL24 (RPL24).